Here is a 440-residue protein sequence, read N- to C-terminus: D-serine dehydratase (440 aa).

The residue at position 116 (Lys116) is an N6-(pyridoxal phosphate)lysine.

Belongs to the serine/threonine dehydratase family. DsdA subfamily. In terms of assembly, monomer. Pyridoxal 5'-phosphate is required as a cofactor.

It carries out the reaction D-serine = pyruvate + NH4(+). The sequence is that of D-serine dehydratase from Salmonella typhi.